Reading from the N-terminus, the 372-residue chain is MALNDFHVSEPYTLGIELEMQVINPPGYDLSQDSSTLIDAVKPQLTAGEIKHDITESMLEMATGVCRDIDQAAAQLSAMQHVILQAASEHHLGICGGGTHPFQKWQRQEVCDNERYQRTLENFGYLIQQATVFGQHVHVGCANGDDAIYLLHGLSHFVPHFIALSAASPYMQGADTRFACARLNIFSAFPDNGPMPWVSNWQEFAGLFRRLSYTTMIDSIKDLHWDIRPSPAFGTVEVRVMDTPLTLDHAINMAGLIQATAHWLLTERPFKPQEQDYLLYKFNRFQACRYGLEGVLTDAYTGDRRRLADDTLRLLDNVTPSARKLGADSAIDALRLQVKKGGNEAQYMREFIADGGSLIGLVQKHCEIWAGQ.

This sequence belongs to the glutamate--cysteine ligase type 2 family. YbdK subfamily. As to quaternary structure, homodimer.

It catalyses the reaction L-cysteine + L-glutamate + ATP = gamma-L-glutamyl-L-cysteine + ADP + phosphate + H(+). Functionally, ATP-dependent carboxylate-amine ligase which exhibits weak glutamate--cysteine ligase activity. In Salmonella typhimurium (strain LT2 / SGSC1412 / ATCC 700720), this protein is Putative glutamate--cysteine ligase 2 (ybdK).